Reading from the N-terminus, the 551-residue chain is Trigger factor (551 aa).

Residues 165 to 250 enclose the PPIase FKBP-type domain; it reads GDLVVLDFAG…ATDVRVPGET (86 aa). Positions 442 to 551 are disordered; that stretch reads ADDDTIGKGH…APAKKKAAAE (110 aa). Residues 458 to 472 are compositionally biased toward basic and acidic residues; the sequence is GHDHHDHDHDHDHAA. A compositionally biased stretch (low complexity) spans 513 to 541; sequence EAAPAPKKAPAKKAAAAKAEEAPAAAPKK. The span at 542–551 shows a compositional bias: basic residues; it reads APAKKKAAAE.

This sequence belongs to the FKBP-type PPIase family. Tig subfamily.

The protein localises to the cytoplasm. The enzyme catalyses [protein]-peptidylproline (omega=180) = [protein]-peptidylproline (omega=0). Its function is as follows. Involved in protein export. Acts as a chaperone by maintaining the newly synthesized protein in an open conformation. Functions as a peptidyl-prolyl cis-trans isomerase. This Rhizorhabdus wittichii (strain DSM 6014 / CCUG 31198 / JCM 15750 / NBRC 105917 / EY 4224 / RW1) (Sphingomonas wittichii) protein is Trigger factor.